The following is a 269-amino-acid chain: 4-hydroxy-tetrahydrodipicolinate reductase (269 aa).

NAD(+) is bound by residues Gly13–Met18 and Asp39. Arg40 is a binding site for NADP(+). NAD(+)-binding positions include Gly101–Thr103 and Ala125–Met128. Catalysis depends on His158, which acts as the Proton donor/acceptor. A (S)-2,3,4,5-tetrahydrodipicolinate-binding site is contributed by His159. Lys162 acts as the Proton donor in catalysis. Residue Gly168–Thr169 coordinates (S)-2,3,4,5-tetrahydrodipicolinate.

Belongs to the DapB family.

It localises to the cytoplasm. It catalyses the reaction (S)-2,3,4,5-tetrahydrodipicolinate + NAD(+) + H2O = (2S,4S)-4-hydroxy-2,3,4,5-tetrahydrodipicolinate + NADH + H(+). The catalysed reaction is (S)-2,3,4,5-tetrahydrodipicolinate + NADP(+) + H2O = (2S,4S)-4-hydroxy-2,3,4,5-tetrahydrodipicolinate + NADPH + H(+). It participates in amino-acid biosynthesis; L-lysine biosynthesis via DAP pathway; (S)-tetrahydrodipicolinate from L-aspartate: step 4/4. Functionally, catalyzes the conversion of 4-hydroxy-tetrahydrodipicolinate (HTPA) to tetrahydrodipicolinate. In Bordetella pertussis (strain Tohama I / ATCC BAA-589 / NCTC 13251), this protein is 4-hydroxy-tetrahydrodipicolinate reductase.